The primary structure comprises 109 residues: Putative double-stranded DNA mimic protein CKO_01325 (109 aa).

Belongs to the putative dsDNA mimic protein family.

Its function is as follows. May act as a double-stranded DNA (dsDNA) mimic. Probably regulates the activity of a dsDNA-binding protein. This is Putative double-stranded DNA mimic protein CKO_01325 from Citrobacter koseri (strain ATCC BAA-895 / CDC 4225-83 / SGSC4696).